A 461-amino-acid chain; its full sequence is Putative dipeptidase CPSG_01350 (461 aa).

Positions 1–10 (MSARDNEKGS) are enriched in basic and acidic residues. The segment at 1-31 (MSARDNEKGSARSQPSHAAASEIENVPRPSR) is disordered. Residues 35-52 (WTGTMIKVFIICACAGIV) form a helical membrane-spanning segment. Zn(2+) contacts are provided by His90, Asp92, and Glu203. An intrachain disulfide couples Cys142 to Cys232. His230 contributes to the substrate binding site. Zn(2+)-binding residues include His274 and His295. Arg306 and Asp366 together coordinate substrate. An N-linked (GlcNAc...) asparagine glycan is attached at Asn379.

The protein belongs to the metallo-dependent hydrolases superfamily. Peptidase M19 family. Requires Zn(2+) as cofactor.

The protein resides in the membrane. The catalysed reaction is an L-aminoacyl-L-amino acid + H2O = 2 an L-alpha-amino acid. Its function is as follows. Hydrolyzes a wide range of dipeptides. The polypeptide is Putative dipeptidase CPSG_01350 (Coccidioides posadasii (strain RMSCC 757 / Silveira) (Valley fever fungus)).